We begin with the raw amino-acid sequence, 209 residues long: dTTP/UTP pyrophosphatase (209 aa).

The active-site Proton acceptor is the D79.

It belongs to the Maf family. YhdE subfamily. A divalent metal cation serves as cofactor.

The protein resides in the cytoplasm. The catalysed reaction is dTTP + H2O = dTMP + diphosphate + H(+). It catalyses the reaction UTP + H2O = UMP + diphosphate + H(+). Functionally, nucleoside triphosphate pyrophosphatase that hydrolyzes dTTP and UTP. May have a dual role in cell division arrest and in preventing the incorporation of modified nucleotides into cellular nucleic acids. The polypeptide is dTTP/UTP pyrophosphatase (Bradyrhizobium diazoefficiens (strain JCM 10833 / BCRC 13528 / IAM 13628 / NBRC 14792 / USDA 110)).